The sequence spans 59 residues: Potassium channel toxin alpha-KTx 15.5 (59 aa).

The signal sequence occupies residues 1 to 22 (MKFSSIILLTLLICSMSIFGNC). Q23 bears the Pyrrolidone carboxylic acid mark. Cystine bridges form between C30–C50, C35–C55, and C39–C57.

The protein belongs to the short scorpion toxin superfamily. Potassium channel inhibitor family. Alpha-KTx 15 subfamily. Expressed by the venom gland.

It localises to the secreted. Functionally, blocker of A-type voltage-gated potassium channels of cerebellar granular cells. May also inhibit Kv4/KCND when coexpressed with DPP6 or DPP10. The occlusion of the outer entry of the K(+) conducting pore is partially reversible and affects both open and closed channels. It shares the same target in rat brain than BmTX3 (AC Q8I0L5) and AmmTX3 (AC P60208). This is Potassium channel toxin alpha-KTx 15.5 from Androctonus australis (Sahara scorpion).